Here is a 313-residue protein sequence, read N- to C-terminus: Olfactory receptor 10G3 (313 aa).

The Extracellular segment spans residues Met1–Thr25. Residue Asn5 is glycosylated (N-linked (GlcNAc...) asparagine). A helical membrane pass occupies residues Leu26–Leu46. The Cytoplasmic segment spans residues Ile47–Arg54. Residues Leu55–Ser76 form a helical membrane-spanning segment. Topologically, residues Ile77–Ala100 are extracellular. Residue Asn85 is glycosylated (N-linked (GlcNAc...) asparagine). The cysteines at positions 98 and 190 are disulfide-linked. Residues Gln101–Tyr121 traverse the membrane as a helical segment. Over Asp122–Lys140 the chain is Cytoplasmic. Residues Leu141 to Ala161 traverse the membrane as a helical segment. At Ile162–Leu198 the chain is on the extracellular side. Residues Val199–Ser218 form a helical membrane-spanning segment. Over Tyr219–Ala238 the chain is Cytoplasmic. Residues Phe239–Ile259 form a helical membrane-spanning segment. At Tyr260–Asp270 the chain is on the extracellular side. A helical membrane pass occupies residues Gly271–Leu291. Residues Arg292–Val313 are Cytoplasmic-facing.

It belongs to the G-protein coupled receptor 1 family.

Its subcellular location is the cell membrane. Its function is as follows. Odorant receptor. This is Olfactory receptor 10G3 (OR10G3) from Homo sapiens (Human).